A 362-amino-acid polypeptide reads, in one-letter code: Probable non-structural 41.0 kDa protein (362 aa).

Positions Met-341 to Ser-362 are disordered.

This chain is Probable non-structural 41.0 kDa protein (S6), found in Maize rough dwarf virus (MRDV).